The sequence spans 228 residues: Ribosomal RNA small subunit methyltransferase G (228 aa).

Residues Gly89, Leu94, 140–141 (VE), and Arg159 each bind S-adenosyl-L-methionine.

It belongs to the methyltransferase superfamily. RNA methyltransferase RsmG family.

The protein resides in the cytoplasm. The enzyme catalyses guanosine(527) in 16S rRNA + S-adenosyl-L-methionine = N(7)-methylguanosine(527) in 16S rRNA + S-adenosyl-L-homocysteine. Its function is as follows. Specifically methylates the N7 position of guanine in position 527 of 16S rRNA. This is Ribosomal RNA small subunit methyltransferase G from Burkholderia vietnamiensis (strain G4 / LMG 22486) (Burkholderia cepacia (strain R1808)).